The chain runs to 174 residues: Regenerating islet-derived protein 3-gamma (174 aa).

The N-terminal stretch at 1-26 is a signal peptide; that stretch reads MLPRVALTTMSWMLLSSLMLLSQVQG. The propeptide occupies 27–37; sequence EDAKEDVPTSR. 3 cysteine pairs are disulfide-bonded: Cys40–Cys51, Cys68–Cys170, and Cys145–Cys162. A C-type lectin domain is found at 47–171; it reads YGSYCYALFS…CISELPYVCK (125 aa). Residues 103–118 form a sufficient to activate EXTL3 region; sequence WIGLHDPTLGQEPNRG. His107 serves as a coordination point for Zn(2+). An EPN motif is present at residues 114-116; it reads EPN. Residues Glu121 and His144 each contribute to the Zn(2+) site.

As to quaternary structure, forms a hexameric membrane-permeabilizing oligomeric pore on membrane phospholipids. The hexamer is formed by three dimers related by helical symmetry. Forms filaments, filamentation traps pore complexes and limits damage to host cells. Interacts with EXTL3. Proteolytic processing by trypsin removes an inhibitory N-terminal propeptide and is essential for peptidoglycan binding and antibacterial activity. In terms of tissue distribution, expressed in injured skeletal muscles and sciatic nerve (at protein level). Expressed in the pancreas. Expression increases during the acute phase of pancreatitis.

The protein resides in the secreted. The protein localises to the cytoplasm. Its activity is regulated as follows. Lipopolysaccharide inhibits pore-forming activity, explaining why is bactericidal for Gram-positive but not Gram-negative bacteria. Bactericidal C-type lectin which acts exclusively against Gram-positive bacteria and mediates bacterial killing by binding to surface-exposed carbohydrate moieties of peptidoglycan. Restricts bacterial colonization of the intestinal epithelial surface and consequently limits activation of adaptive immune responses by the microbiota. Its function is as follows. Acts as a hormone in response to different stimuli like anti-inflammatory signals, such as IL17A, or gut microbiome. Is secreted by different cell types to activate its receptor EXTL3 and induce cell specific signaling pathways. Induced by IL17A in keratinocytes, regulates keratinocyte proliferation and differentiation after skin injury. In parallel, inhibits skin inflammation through the inhibition of inflammatory cytokines such as IL6 and TNF. Induced by IL22 in lung epithelial cells, inhibits cytokine production and regulates allergic airway inflammation. Induced in small intestine by inulin-enriched diet and Lactobacillus gasseri enriched microbiome, plays a role in the improvement of gut barrier function, the regulation of energy balance and glucose levels. Modulates microbiota composition in duodenal contents. Produced by nociceptor in response to endotoxins, prevents endotoxic death by targeting kynurenine pathway in microglia. In terms of biological role, has bacteriostatic activity. Functionally, has bactericidal activity against L.monocytogenes and methicillin-resistant S.aureus. In Rattus norvegicus (Rat), this protein is Regenerating islet-derived protein 3-gamma.